The sequence spans 335 residues: Spliceosome-associated protein 49 (335 aa).

RRM domains lie at 13–84 and 101–172; these read IYLG…PIRV and LFVG…PITV. Residues 204–223 form a disordered region; that stretch reads VTPQSTLPPGFSPATPAPTS.

The protein belongs to the SF3B4 family.

It is found in the nucleus. The chain is Spliceosome-associated protein 49 (sap49) from Schizosaccharomyces pombe (strain 972 / ATCC 24843) (Fission yeast).